A 330-amino-acid chain; its full sequence is Protein FAM170A (330 aa).

3 disordered regions span residues 1–54 (MKRR…VTST), 76–104 (HRDS…HVSL), and 169–218 (VGTP…AKTP). A compositionally biased stretch (polar residues) spans 174–185 (SDVSTRNLLSDS). The span at 189–200 (GEEKEHEERTES) shows a compositional bias: basic and acidic residues. Residue Thr217 is modified to Phosphothreonine. The segment at 228-252 (FRCMACCRVFTTMEALQEHVQFGIR) adopts a C2H2-type; degenerate zinc-finger fold. The tract at residues 270–330 (NMESESTQDE…VFHSPKDRNS (61 aa)) is disordered. Residues 275-293 (STQDEQEEENGNEKEEEEK) are compositionally biased toward acidic residues. Ser315 bears the Phosphoserine mark.

This sequence belongs to the FAM170 family. In terms of tissue distribution, expressed strongly in testis and brain and weakly in prostate, spleen, pancreas and uterus.

The protein resides in the nucleus. Functionally, acts as a nuclear transcription factor that positively regulates the expression of heat shock genes. Binds to heat shock promoter elements (HSE). The protein is Protein FAM170A (FAM170A) of Homo sapiens (Human).